The following is a 292-amino-acid chain: ATP-dependent Clp protease proteolytic subunit 4, chloroplastic (292 aa).

A chloroplast-targeting transit peptide spans 1–65 (MGTLSLSSSL…LRFANASIEM (65 aa)). Position 66 is an N-acetylserine (Ser-66). Ser-158 acts as the Nucleophile in catalysis. Residue His-183 is part of the active site.

The protein belongs to the peptidase S14 family. As to quaternary structure, component of the chloroplastic Clp protease core complex which consist of at least 16 proteins: CLPP4 (3 copies), CLPP5 (3 copies), CLPR4 (2 copies), ClpP1 (1 copy), CLPP6 (1 copy), CLPR2 (1 copy), CLPT1 (1 copy), CLPT2 (1 copy) and 3 copies of CLPP3 and/or CLPR1 and/or CLPR3. Interacts with CHIP. The core complex is organized in two heptameric rings, one containing CLPP3,4,5,6 in a 1:2:3:1 ratio and the other CLPP1 and CLPR1,2,3,4 in a 3:1:1:1:1 ratio. Post-translationally, ubiquitinated by CHIP. As to expression, mostly expressed in leaves. Also detected in stems, and to a lower extent, in roots (at protein level).

The protein localises to the plastid. It localises to the chloroplast stroma. It carries out the reaction Hydrolysis of proteins to small peptides in the presence of ATP and magnesium. alpha-casein is the usual test substrate. In the absence of ATP, only oligopeptides shorter than five residues are hydrolyzed (such as succinyl-Leu-Tyr-|-NHMec, and Leu-Tyr-Leu-|-Tyr-Trp, in which cleavage of the -Tyr-|-Leu- and -Tyr-|-Trp bonds also occurs).. In terms of biological role, cleaves peptides in various proteins in a process that requires ATP hydrolysis. Has a chymotrypsin-like activity. Plays a major role in the degradation of misfolded proteins. Essential protein required for chloroplast development and integrity. Essential for Embryogenesis. This is ATP-dependent Clp protease proteolytic subunit 4, chloroplastic from Arabidopsis thaliana (Mouse-ear cress).